We begin with the raw amino-acid sequence, 333 residues long: Ferredoxin--NADP reductase (333 aa).

FAD-binding residues include D32, Q40, Y45, A85, F119, D285, and T326.

It belongs to the ferredoxin--NADP reductase type 2 family. In terms of assembly, homodimer. The cofactor is FAD.

It carries out the reaction 2 reduced [2Fe-2S]-[ferredoxin] + NADP(+) + H(+) = 2 oxidized [2Fe-2S]-[ferredoxin] + NADPH. This Neorickettsia sennetsu (strain ATCC VR-367 / Miyayama) (Ehrlichia sennetsu) protein is Ferredoxin--NADP reductase.